Here is a 421-residue protein sequence, read N- to C-terminus: Adenylosuccinate synthetase (421 aa).

GTP-binding positions include 11–17 and 39–41; these read GDEGKGK and GHT. Aspartate 12 (proton acceptor) is an active-site residue. Mg(2+) is bound by residues aspartate 12 and glycine 39. IMP-binding positions include 12–15, 37–40, threonine 129, arginine 143, asparagine 219, threonine 234, and arginine 298; these read DEGK and NAGH. Residue histidine 40 is the Proton donor of the active site. Residue 294-300 participates in substrate binding; the sequence is VTTGRRR. Residues arginine 300, 326–328, and 409–411 each bind GTP; these read KLD and GTG.

This sequence belongs to the adenylosuccinate synthetase family. As to quaternary structure, homodimer. Mg(2+) is required as a cofactor.

It localises to the cytoplasm. It carries out the reaction IMP + L-aspartate + GTP = N(6)-(1,2-dicarboxyethyl)-AMP + GDP + phosphate + 2 H(+). Its pathway is purine metabolism; AMP biosynthesis via de novo pathway; AMP from IMP: step 1/2. In terms of biological role, plays an important role in the de novo pathway and in the salvage pathway of purine nucleotide biosynthesis. Catalyzes the first committed step in the biosynthesis of AMP from IMP. This chain is Adenylosuccinate synthetase, found in Paracoccidioides lutzii (strain ATCC MYA-826 / Pb01) (Paracoccidioides brasiliensis).